We begin with the raw amino-acid sequence, 495 residues long: Glycerol kinase (495 aa).

Residue Thr13 participates in ADP binding. ATP-binding residues include Thr13, Thr14, and Ser15. Thr13 lines the sn-glycerol 3-phosphate pocket. Position 17 (Arg17) interacts with ADP. The sn-glycerol 3-phosphate site is built by Arg83, Glu84, Tyr135, and Asp244. Arg83, Glu84, Tyr135, Asp244, and Gln245 together coordinate glycerol. ADP contacts are provided by Thr266 and Gly309. 4 residues coordinate ATP: Thr266, Gly309, Gln313, and Gly410. 2 residues coordinate ADP: Gly410 and Asn414.

Belongs to the FGGY kinase family.

It catalyses the reaction glycerol + ATP = sn-glycerol 3-phosphate + ADP + H(+). It functions in the pathway polyol metabolism; glycerol degradation via glycerol kinase pathway; sn-glycerol 3-phosphate from glycerol: step 1/1. Inhibited by fructose 1,6-bisphosphate (FBP). Key enzyme in the regulation of glycerol uptake and metabolism. Catalyzes the phosphorylation of glycerol to yield sn-glycerol 3-phosphate. The polypeptide is Glycerol kinase (Shewanella sediminis (strain HAW-EB3)).